A 117-amino-acid chain; its full sequence is Large ribosomal subunit protein bL20c (117 aa).

The protein belongs to the bacterial ribosomal protein bL20 family.

The protein resides in the plastid. It is found in the chloroplast. Functionally, binds directly to 23S ribosomal RNA and is necessary for the in vitro assembly process of the 50S ribosomal subunit. It is not involved in the protein synthesizing functions of that subunit. The polypeptide is Large ribosomal subunit protein bL20c (rpl20) (Arabidopsis thaliana (Mouse-ear cress)).